A 274-amino-acid polypeptide reads, in one-letter code: Deoxyribonuclease TATDN3 (274 aa).

6 residues coordinate Zn(2+): His-12, His-14, Glu-107, His-147, His-170, and Asp-218.

This sequence belongs to the metallo-dependent hydrolases superfamily. TatD-type hydrolase family. The cofactor is Mn(2+). It depends on Ca(2+) as a cofactor. Requires Mg(2+) as cofactor. Zn(2+) is required as a cofactor.

It is found in the nucleus. Its activity is regulated as follows. The 3'-exonuclease activity is sensitive to the metal ion present in the active site, whereas the AP endodeoxyribonuclease activity is observed in a variety of divalent metal cofactors. 3'-exoxonuclease activity is suppressed in the presence of Ca(2+), Zn(2+) and Ni(2+). Functionally, exhibits 3'-exonuclease activities and apurinic/apyrimidinic (AP) endonuclease (in vitro). Show preferential AP endonuclease activity on double-stranded DNA substrates and 3'- exonuclease activity on single-stranded DNA. In Homo sapiens (Human), this protein is Deoxyribonuclease TATDN3 (TATDN3).